Reading from the N-terminus, the 142-residue chain is Large ribosomal subunit protein bL27m (142 aa).

A disordered region spans residues 27 to 48; it reads TKKSAGSTKNGRTSQPKNLGLK. Residues 30 to 43 are compositionally biased toward polar residues; that stretch reads SAGSTKNGRTSQPK.

This sequence belongs to the bacterial ribosomal protein bL27 family.

It is found in the mitochondrion. The polypeptide is Large ribosomal subunit protein bL27m (mrpl27) (Dictyostelium discoideum (Social amoeba)).